The primary structure comprises 156 residues: 2-C-methyl-D-erythritol 2,4-cyclodiphosphate synthase (156 aa).

2 residues coordinate a divalent metal cation: D10 and H12. 4-CDP-2-C-methyl-D-erythritol 2-phosphate is bound by residues D10–H12 and H36–S37. H44 provides a ligand contact to a divalent metal cation. 4-CDP-2-C-methyl-D-erythritol 2-phosphate-binding positions include D58 to G60 and F63 to D67.

This sequence belongs to the IspF family. Homotrimer. A divalent metal cation serves as cofactor.

It carries out the reaction 4-CDP-2-C-methyl-D-erythritol 2-phosphate = 2-C-methyl-D-erythritol 2,4-cyclic diphosphate + CMP. The protein operates within isoprenoid biosynthesis; isopentenyl diphosphate biosynthesis via DXP pathway; isopentenyl diphosphate from 1-deoxy-D-xylulose 5-phosphate: step 4/6. In terms of biological role, involved in the biosynthesis of isopentenyl diphosphate (IPP) and dimethylallyl diphosphate (DMAPP), two major building blocks of isoprenoid compounds. Catalyzes the conversion of 4-diphosphocytidyl-2-C-methyl-D-erythritol 2-phosphate (CDP-ME2P) to 2-C-methyl-D-erythritol 2,4-cyclodiphosphate (ME-CPP) with a corresponding release of cytidine 5-monophosphate (CMP). This Aquifex aeolicus (strain VF5) protein is 2-C-methyl-D-erythritol 2,4-cyclodiphosphate synthase.